Reading from the N-terminus, the 1391-residue chain is DNA-directed RNA polymerase subunit beta (1391 aa).

It belongs to the RNA polymerase beta chain family. As to quaternary structure, the RNAP catalytic core consists of 2 alpha, 1 beta, 1 beta' and 1 omega subunit. When a sigma factor is associated with the core the holoenzyme is formed, which can initiate transcription.

The enzyme catalyses RNA(n) + a ribonucleoside 5'-triphosphate = RNA(n+1) + diphosphate. Functionally, DNA-dependent RNA polymerase catalyzes the transcription of DNA into RNA using the four ribonucleoside triphosphates as substrates. This Mycoplasma pneumoniae (strain ATCC 29342 / M129 / Subtype 1) (Mycoplasmoides pneumoniae) protein is DNA-directed RNA polymerase subunit beta.